A 422-amino-acid chain; its full sequence is Zinc finger protein 550 (422 aa).

The KRAB domain maps to 12-83; sequence VTFKDVAVTF…KRGLSHATCA (72 aa). The tract at residues 113 to 158 is disordered; it reads LESSTSSDSRLGRARDEEGLLEMQKGKVTPETDLHKETHLGKVSLE. A compositionally biased stretch (basic and acidic residues) spans 122-152; it reads RLGRARDEEGLLEMQKGKVTPETDLHKETHL. 8 consecutive C2H2-type zinc fingers follow at residues 203-225, 231-253, 259-281, 287-309, 315-337, 343-365, 371-393, and 399-421; these read YKCKQCGKGFNRKWYLVRHQRVH, YECNACGKAFSQSSTLIRHYLIH, YKCLECGKAFKRRSYLMQHHPIH, YECSQCRKAFTHRSTFIRHNRTH, FECKECEKAFSNRAHLIQHYIIH, YDCMACGKAFRCSSELIQHQRIH, YECTQCGKAFHRSTYLIQHSVIH, and YKCIECGKAFKRRSHLLQHQRVH.

Belongs to the krueppel C2H2-type zinc-finger protein family.

Its subcellular location is the nucleus. May be involved in transcriptional regulation. In Homo sapiens (Human), this protein is Zinc finger protein 550 (ZNF550).